The sequence spans 1783 residues: Chitin synthase A (1783 aa).

5 N-linked (GlcNAc...) asparagine glycosylation sites follow: asparagine 159, asparagine 637, asparagine 652, asparagine 664, and asparagine 669. Helical transmembrane passes span 745-765 (IWVAIVWFWTFWIPSPLLSFV) and 781-801 (LTLVWFIVLINAAIVFWIVAF). 2 N-linked (GlcNAc...) asparagine glycosylation sites follow: asparagine 1014 and asparagine 1018. Residues 1051-1071 (IMLAMTIILCSVILVKFLAAL) traverse the membrane as a helical segment. The N-linked (GlcNAc...) asparagine glycan is linked to asparagine 1416. 3 consecutive transmembrane segments (helical) span residues 1441–1461 (FVVFIDLFGTIILPATTIYLG), 1474–1494 (FPIISIIMLAAVYGLQALIFI), and 1502–1522 (IGWMIIYIMAFPIYSFALPIY). Asparagine 1529 and asparagine 1617 each carry an N-linked (GlcNAc...) asparagine glycan. The tract at residues 1659 to 1724 (THDINRGQTP…SFDFQRGNMQ (66 aa)) is disordered. The segment covering 1664-1688 (RGQTPFQDFPSSRPSVSNLRGQANP) has biased composition (polar residues). Asparagine 1695 carries an N-linked (GlcNAc...) asparagine glycan. One can recognise a DEK-C domain in the interval 1725–1781 (GPDDSMIIEAIQGVLREVDLDTVTKKQVRALVEQRLQTGLVGERRTFMDRQIDNELA).

It belongs to the chitin synthase family. Class V subfamily.

Its subcellular location is the cell membrane. It catalyses the reaction [(1-&gt;4)-N-acetyl-beta-D-glucosaminyl](n) + UDP-N-acetyl-alpha-D-glucosamine = [(1-&gt;4)-N-acetyl-beta-D-glucosaminyl](n+1) + UDP + H(+). Polymerizes chitin, a structural polymer of the cell wall and septum, by transferring the sugar moiety of UDP-GlcNAc to the non-reducing end of the growing chitin polymer. Responsible for about 29% of the chitin in conidial walls, is essential for conidial wall strength in media with high water potential and contributes to strength of hyphal tips. The sequence is that of Chitin synthase A from Colletotrichum graminicola (Maize anthracnose fungus).